A 263-amino-acid chain; its full sequence is Adaptin ear-binding coat-associated protein 2 (263 aa).

Disordered regions lie at residues 166–194 (KKKE…PPGG) and 219–263 (APSS…WVQF). A Phosphoserine modification is found at serine 181. 2 consecutive short sequence motifs (WXXF motif) follow at residues 240 to 243 (WGDF) and 260 to 263 (WVQF). A compositionally biased stretch (low complexity) spans 246-263 (STGSTSSQTQPGTGWVQF).

The protein belongs to the NECAP family. In terms of assembly, interacts with AP1G1 and AP2A1 components of the adapter protein complexes AP-1 and AP-2. Interacts with the GAE domain proteins GGA1, GGA2 and GGA3.

The protein resides in the cytoplasmic vesicle. It localises to the clathrin-coated vesicle membrane. It is found in the cell membrane. Involved in endocytosis. The protein is Adaptin ear-binding coat-associated protein 2 (NECAP2) of Homo sapiens (Human).